The primary structure comprises 663 residues: UvrABC system protein B (663 aa).

Residues 26–414 (DGLESGLAKQ…DNVAEQVVRP (389 aa)) form the Helicase ATP-binding domain. Residue 39-46 (GVTGSGKT) participates in ATP binding. The short motif at 92–115 (YYDYYQPEAYVPASDTFIEKDASI) is the Beta-hairpin element. One can recognise a Helicase C-terminal domain in the interval 430–596 (QVDDLMSEIR…GINKSVEDIL (167 aa)). The region spanning 624 to 659 (AKQINALEKQMYAHAQNMEFELAAKIRDEYLLLKEQ) is the UVR domain.

The protein belongs to the UvrB family. As to quaternary structure, forms a heterotetramer with UvrA during the search for lesions. Interacts with UvrC in an incision complex.

The protein resides in the cytoplasm. The UvrABC repair system catalyzes the recognition and processing of DNA lesions. A damage recognition complex composed of 2 UvrA and 2 UvrB subunits scans DNA for abnormalities. Upon binding of the UvrA(2)B(2) complex to a putative damaged site, the DNA wraps around one UvrB monomer. DNA wrap is dependent on ATP binding by UvrB and probably causes local melting of the DNA helix, facilitating insertion of UvrB beta-hairpin between the DNA strands. Then UvrB probes one DNA strand for the presence of a lesion. If a lesion is found the UvrA subunits dissociate and the UvrB-DNA preincision complex is formed. This complex is subsequently bound by UvrC and the second UvrB is released. If no lesion is found, the DNA wraps around the other UvrB subunit that will check the other stand for damage. This Legionella pneumophila (strain Lens) protein is UvrABC system protein B.